We begin with the raw amino-acid sequence, 310 residues long: Inner membrane protein YfdC (310 aa).

The span at 1 to 12 (MDNDKIDQHSDE) shows a compositional bias: basic and acidic residues. The tract at residues 1–27 (MDNDKIDQHSDEIEVESEEKERGKKIE) is disordered. Over 1-58 (MDNDKIDQHSDEIEVESEEKERGKKIEIDEDRLPSRAMAIHEHIRQDGEKELERDAMA) the chain is Cytoplasmic. A helical transmembrane segment spans residues 59–81 (LLWSAIAAGLSMGASLLAKGIFQ). Over 82–90 (VELEGVPGS) the chain is Periplasmic. A helical membrane pass occupies residues 91–113 (FLLENLGYTFGFIIVIMARQQLF). The Cytoplasmic segment spans residues 114-133 (TENTVTAVLPVMQKPTMSNV). Residues 134-156 (GLLIRLWGVVLLGNILGTGIAAW) form a helical membrane-spanning segment. Topologically, residues 157–186 (AFEYMPIFNEETRDAFVKIGMDVMKNTPSE) are periplasmic. The chain crosses the membrane as a helical span at residues 187-206 (MFANAIISGWLIATMVWMFP). The Cytoplasmic segment spans residues 207 to 212 (AAGAAK). Residues 213 to 232 (IVVIILMTWLIALGDTTHIV) form a helical membrane-spanning segment. Residues 233–251 (VGSVEILYLVFNGTLHWSD) lie on the Periplasmic side of the membrane. A helical membrane pass occupies residues 252 to 274 (FIWPFALPTLAGNICGGTFIFAL). At 275–310 (MSHAQIRNDMSNKRKAEARQKAERAENIKKNYKNPA) the chain is on the cytoplasmic side. Positions 291–303 (EARQKAERAENIK) are enriched in basic and acidic residues. The segment at 291–310 (EARQKAERAENIKKNYKNPA) is disordered.

It is found in the cell inner membrane. In Escherichia coli (strain K12), this protein is Inner membrane protein YfdC (yfdC).